Reading from the N-terminus, the 401-residue chain is MASPTLALAQSPPPKSPAVSVSQRNPHCWSKLPLDLMQLVFERLAFLDFERAKSVCSSWQFGSKQSKPNNQIPWMILFPTDKNYCLLFNPEDKEKLYKTQHLGDDFAKSIVLATYRSWLLMQPRYEELEDQTLDQEFHLYIKDLLTCERINLPAFESDIFGLSHPILWIDDKTKDYLVIGTINRETMVSFKNGDNSWKKFPELPKSSCTDMCLNMIYKDHKLHYLDYSNLYIYDFFGEFPREAFRISVREFVGYATNPYGYDEFPEVPLKLKLNRYIYNMIVTVRGDVLIVASLHFSMAETWEFIICKMDSSKVNKWEEIVSLGDESILLGLGITVLAKDMEGITCNSIYFTADDFYEDYEENEIFIYNLDTNKVEIPHQFVSSSIPSAHARWFLPTFKRD.

Residues 1–23 (MASPTLALAQSPPPKSPAVSVSQ) are disordered. One can recognise an F-box domain in the interval 27-74 (HCWSKLPLDLMQLVFERLAFLDFERAKSVCSSWQFGSKQSKPNNQIPW).

In Arabidopsis thaliana (Mouse-ear cress), this protein is F-box protein At1g69090.